The chain runs to 346 residues: Probable dolichyl-diphosphooligosaccharide--protein glycosyltransferase subunit 3B (346 aa).

A signal peptide spans 1-22 (MALKSKLVSLLFLIATLSSTFA). Over 23 to 189 (ASFSDSDSDS…KVGPIQRPPL (167 aa)) the chain is Lumenal. Asparagine 108 is a glycosylation site (N-linked (GlcNAc...) asparagine). The chain crosses the membrane as a helical span at residues 190-210 (LSKPQIGIIVALIVIATPFII). The Cytoplasmic portion of the chain corresponds to 211-225 (KRVLKGETILHDTRL). A helical membrane pass occupies residues 226–246 (WLSGAIFIYFFSVAGTMHNII). Residues 247-277 (RKMPMFLQDRNDPNKLVFFYQGSGMQLGAEG) are Lumenal-facing. Residues 278–298 (FAVGFLYTVVGLLLAFVTNVL) traverse the membrane as a helical segment. Residues 299 to 308 (VRVKNITAQR) lie on the Cytoplasmic side of the membrane. A helical transmembrane segment spans residues 309-329 (LIMLLALFISFWAVKKVVYLD). Over 330–346 (NWKTGYGIHPYWPSSWR) the chain is Lumenal.

It belongs to the OST3/OST6 family. In terms of assembly, component of the oligosaccharyltransferase (OST) complex.

It is found in the endoplasmic reticulum membrane. Functionally, subunit of the oligosaccharyl transferase (OST) complex that catalyzes the initial transfer of a defined glycan (Glc(3)Man(9)GlcNAc(2) in eukaryotes) from the lipid carrier dolichol-pyrophosphate to an asparagine residue within an Asn-X-Ser/Thr consensus motif in nascent polypeptide chains, the first step in protein N-glycosylation. N-glycosylation occurs cotranslationally and the complex associates with the Sec61 complex at the channel-forming translocon complex that mediates protein translocation across the endoplasmic reticulum (ER). All subunits are required for a maximal enzyme activity. The chain is Probable dolichyl-diphosphooligosaccharide--protein glycosyltransferase subunit 3B (OST3B) from Arabidopsis thaliana (Mouse-ear cress).